A 285-amino-acid chain; its full sequence is Complement C1q tumor necrosis factor-related protein 2 (285 aa).

The N-terminal stretch at 1–15 (MIPWVLLACALPCAA) is a signal peptide. The interval 33–144 (QLVCSLPGPQ…PGLPGPCSCG (112 aa)) is disordered. The region spanning 40-141 (GPQGPPGPPG…KGEPGLPGPC (102 aa)) is the Collagen-like domain. Positions 41-51 (PQGPPGPPGAP) are enriched in pro residues. Residues 53 to 65 (PSGMMGRMGFPGK) show a composition bias toward low complexity. Residues 66–78 (DGQDGHDGDRGDS) show a composition bias toward basic and acidic residues. Residues 84–120 (PGRTGNRGKPGPKGKAGAIGRAGPRGPKGVNGTPGKH) show a composition bias toward low complexity. The region spanning 145–281 (SGHTKSAFSV…GFLIYADQDD (137 aa)) is the C1q domain.

In terms of assembly, may interact with ERFE. Expressed in adipose tissue.

The protein resides in the secreted. Its function is as follows. Involved in the regulation of lipid metabolism in adipose tissue and liver. The protein is Complement C1q tumor necrosis factor-related protein 2 (C1QTNF2) of Homo sapiens (Human).